The sequence spans 300 residues: Porphobilinogen deaminase (300 aa).

At Cys241 the chain carries S-(dipyrrolylmethanemethyl)cysteine.

It belongs to the HMBS family. Monomer. Dipyrromethane serves as cofactor.

It carries out the reaction 4 porphobilinogen + H2O = hydroxymethylbilane + 4 NH4(+). It participates in porphyrin-containing compound metabolism; protoporphyrin-IX biosynthesis; coproporphyrinogen-III from 5-aminolevulinate: step 2/4. Its function is as follows. Tetrapolymerization of the monopyrrole PBG into the hydroxymethylbilane pre-uroporphyrinogen in several discrete steps. This Sorangium cellulosum (strain So ce56) (Polyangium cellulosum (strain So ce56)) protein is Porphobilinogen deaminase.